The sequence spans 303 residues: Cytochrome c oxidase subunit 2 (303 aa).

The first 25 residues, 1–25, serve as a signal peptide directing secretion; sequence MRHSTTLTGCATGAAGLLAATAAAA. A run of 2 helical transmembrane segments spans residues 60-80 and 104-124; these read FILVIIAAITIFVTLLILYAV and WTIVPIVILVAIGAFSLPVLF. H217, C252, C256, and H260 together coordinate Cu cation.

It belongs to the cytochrome c oxidase subunit 2 family. The cofactor is Cu cation.

It localises to the cell membrane. The catalysed reaction is 4 Fe(II)-[cytochrome c] + O2 + 8 H(+)(in) = 4 Fe(III)-[cytochrome c] + 2 H2O + 4 H(+)(out). Its function is as follows. Subunits I and II form the functional core of the enzyme complex. Electrons originating in cytochrome c are transferred via heme a and Cu(A) to the binuclear center formed by heme a3 and Cu(B). The chain is Cytochrome c oxidase subunit 2 (ctaC) from Cereibacter sphaeroides (Rhodobacter sphaeroides).